We begin with the raw amino-acid sequence, 385 residues long: Single-stranded DNA-binding protein 4 (385 aa).

Position 1 is an N-acetylmethionine (M1). Residues 17-49 form the LisH domain; the sequence is AREKLALYVYEYLLHIGAQKSAQTFLSEIRWEK. Disordered regions lie at residues 122–287 and 331–363; these read FQGP…NSSE and GSGD…GEMA. Residues 245–263 are compositionally biased toward low complexity; sequence SPSGNSIPYSSSSPGSYTG. The span at 267-277 shows a compositional bias: pro residues; the sequence is GGGPPGTPIMP. At S341 the chain carries Phosphoserine. T355 is modified (phosphothreonine).

It is found in the nucleus. The protein is Single-stranded DNA-binding protein 4 (SSBP4) of Homo sapiens (Human).